The following is a 142-amino-acid chain: Transcriptional regulator MraZ (142 aa).

2 consecutive SpoVT-AbrB domains span residues 5-47 and 76-119; these read EYQH…PLDE and ACEV…SKEK.

The protein belongs to the MraZ family. As to quaternary structure, forms oligomers.

The protein localises to the cytoplasm. The protein resides in the nucleoid. In Clostridium beijerinckii (strain ATCC 51743 / NCIMB 8052) (Clostridium acetobutylicum), this protein is Transcriptional regulator MraZ.